The sequence spans 381 residues: Protein-glutamate methylesterase/protein-glutamine glutaminase (381 aa).

Positions 20-138 (RVMVVDDSVV…EIAAADIFKH (119 aa)) constitute a Response regulatory domain. At D71 the chain carries 4-aspartylphosphate. Residues 154-176 (PAALASAREPEPRPIQATPVPAH) are disordered. One can recognise a CheB-type methylesterase domain in the interval 183–373 (PFSTHAPRAL…PLQQIAPKLV (191 aa)). Catalysis depends on residues S197, H225, and D321.

The protein belongs to the CheB family. In terms of processing, phosphorylated by CheA. Phosphorylation of the N-terminal regulatory domain activates the methylesterase activity.

The protein resides in the cytoplasm. It catalyses the reaction [protein]-L-glutamate 5-O-methyl ester + H2O = L-glutamyl-[protein] + methanol + H(+). The catalysed reaction is L-glutaminyl-[protein] + H2O = L-glutamyl-[protein] + NH4(+). Its function is as follows. Involved in chemotaxis. Part of a chemotaxis signal transduction system that modulates chemotaxis in response to various stimuli. Catalyzes the demethylation of specific methylglutamate residues introduced into the chemoreceptors (methyl-accepting chemotaxis proteins or MCP) by CheR. Also mediates the irreversible deamidation of specific glutamine residues to glutamic acid. This Nitrobacter hamburgensis (strain DSM 10229 / NCIMB 13809 / X14) protein is Protein-glutamate methylesterase/protein-glutamine glutaminase.